The primary structure comprises 332 residues: Torsin-1A (332 aa).

Residues 1–20 (MKLGRAALGLLLLAPSVVQA) form the signal peptide. The segment at 91–251 (KPKKPLTLSL…VSVFNNKNSG (161 aa)) is interaction with SNAPIN. 102-109 (GWTGTGKN) provides a ligand contact to ATP. N143 and N158 each carry an N-linked (GlcNAc...) asparagine glycan. An interaction with KLC1 region spans residues 251-332 (GFWHSSLIDR…FTKLDYYYDD (82 aa)). An interaction with SYNE3 region spans residues 312–332 (RVFSDKGCKTVFTKLDYYYDD).

The protein belongs to the ClpA/ClpB family. Torsin subfamily. Homohexamer. Interacts with TOR1B; the interaction may be specific of neural tissues. Interacts (ATP-bound) with TOR1AIP1 and TOR1AIP2; the interactions induce ATPase activity. Interacts with KLHL14; preferentially when ATP-free. Interacts with KLC1 (via TPR repeats); the interaction associates TOR1A with the kinesin oligomeric complex. Interacts with COPS4; the interaction associates TOR1A with the CSN complex. Interacts with SNAPIN; the interaction is direct and associates SNAPIN with the CSN complex. Interacts with STON2. Interacts (ATP-bound) with SYNE3 (via KASH domain); the interaction is required for SYNE3 nuclear envelope localization. Interacts with VIM; the interaction associates TOR1A with the cytoskeleton. Interacts with PLEC. Interacts (ATP-bound) with SLC6A3; regulates SLC6A3 transport to the plasma membrane. In terms of processing, N-glycosylated.

The protein resides in the endoplasmic reticulum lumen. Its subcellular location is the nucleus membrane. The protein localises to the cell projection. It is found in the growth cone. It localises to the cytoplasmic vesicle membrane. The protein resides in the cytoplasmic vesicle. Its subcellular location is the secretory vesicle. The protein localises to the synaptic vesicle. It is found in the cytoplasm. It localises to the cytoskeleton. The catalysed reaction is ATP + H2O = ADP + phosphate + H(+). In terms of biological role, protein with chaperone functions important for the control of protein folding, processing, stability and localization as well as for the reduction of misfolded protein aggregates. Involved in the regulation of synaptic vesicle recycling, controls STON2 protein stability in collaboration with the COP9 signalosome complex (CSN). In the nucleus, may link the cytoskeleton with the nuclear envelope, this mechanism seems to be crucial for the control of nuclear polarity, cell movement and, specifically in neurons, nuclear envelope integrity. Participates in the cellular trafficking and may regulate the subcellular location of multipass membrane proteins such as the dopamine transporter SLC6A3, leading to the modulation of dopamine neurotransmission. In the endoplasmic reticulum, plays a role in the quality control of protein folding by increasing clearance of misfolded proteins such as SGCE variants or holding them in an intermediate state for proper refolding. May have a redundant function with TOR1B in non-neural tissues. The sequence is that of Torsin-1A (TOR1A) from Macaca fascicularis (Crab-eating macaque).